Consider the following 550-residue polypeptide: Ribosomal large subunit pseudouridine synthase B (550 aa).

The 70-residue stretch at 28–97 (ERLHKVLAQA…PSRVLIYNKP (70 aa)) folds into the S4 RNA-binding domain. The Nucleophile role is filled by Asp132. A disordered region spans residues 294-550 (KSTVHVSRDG…RPPGGGNRGR (257 aa)). The segment covering 317 to 334 (DEGRELRRFDNLREDRGR) has biased composition (basic and acidic residues). Composition is skewed to gly residues over residues 420-451 (GPGG…GQSQ), 490-501 (PSGGRPGPGGNR), and 509-550 (GPGG…NRGR).

This sequence belongs to the pseudouridine synthase RsuA family.

The enzyme catalyses uridine(2605) in 23S rRNA = pseudouridine(2605) in 23S rRNA. Its function is as follows. Responsible for synthesis of pseudouridine from uracil-2605 in 23S ribosomal RNA. The polypeptide is Ribosomal large subunit pseudouridine synthase B (rluB) (Xanthomonas axonopodis pv. citri (strain 306)).